The sequence spans 277 residues: MSLAEQIEQQQDDAGWSAHLQLRFVQRDGVTRLGAWKHFGPLLVQRPFYPEGAPCHVYVLHPPGGIVAGDRLELDIHLEPGSHALLTMPGASKFYRSIGPTARLAQRFHLAAGSTLEWLPQDSIFFSGARASLASRFTLEPGARLLAWETLCLGRPVMHERFDHGALDSLLHIELPDEVGLHERLRLEGGHLGKLGGHPLLATFCAAPANQAVLEQVRPLLDELGNPAGATLLGSLLVIRVLDHDNQHLQRTLQRLWHVLRPAILGLPACPPRIWAT.

It belongs to the UreD family. In terms of assembly, ureD, UreF and UreG form a complex that acts as a GTP-hydrolysis-dependent molecular chaperone, activating the urease apoprotein by helping to assemble the nickel containing metallocenter of UreC. The UreE protein probably delivers the nickel.

The protein resides in the cytoplasm. Its function is as follows. Required for maturation of urease via the functional incorporation of the urease nickel metallocenter. In Pseudomonas putida (strain ATCC 47054 / DSM 6125 / CFBP 8728 / NCIMB 11950 / KT2440), this protein is Urease accessory protein UreD.